We begin with the raw amino-acid sequence, 101 residues long: MAKKSAVAREVKRRKLVEANFQKRAELRKLAKSLSVSEEERERAREALNKMKRDTSPSRLHNRCLLTGRPRGYLRKFAISRICFRQMASMGDIPGVIKASW.

The protein belongs to the universal ribosomal protein uS14 family. As to quaternary structure, part of the 30S ribosomal subunit. Contacts proteins S3 and S10.

Binds 16S rRNA, required for the assembly of 30S particles and may also be responsible for determining the conformation of the 16S rRNA at the A site. The protein is Small ribosomal subunit protein uS14 of Chlamydia muridarum (strain MoPn / Nigg).